A 395-amino-acid chain; its full sequence is GPI-anchor transamidase (395 aa).

Residues 1-27 form the signal peptide; that stretch reads MVGTWFLCRGFTTLAGLLLLPFGSLAA. At 28–368 the chain is on the lumenal side; it reads SQIEDQAEQF…PKLKDWHPPG (341 aa). 4 residues coordinate Ca(2+): aspartate 79, isoleucine 82, glutamate 118, and aspartate 120. Histidine 164 (proton donor) is an active-site residue. Catalysis depends on cysteine 206, which acts as the Nucleophile; acyl-thioester intermediate. A protein is bound by residues cysteine 206, serine 232, and serine 234. The tract at residues 231–236 is autoinhibitory loop; that stretch reads DSLSHQ. Cysteine 275 and cysteine 280 form a disulfide bridge. A helical transmembrane segment spans residues 369-385; that stretch reads GFILGLWALIIMVFFKT. Residues 386 to 395 are Cytoplasmic-facing; the sequence is YGIKHMKFIF.

This sequence belongs to the peptidase C13 family. As to quaternary structure, heteropentamer. Part of the GPI-anchor transamidase complex, consisting of PIGK, PIGT, PIGS, PIGU and GAA1. Interacts with GPAA1. Interacts with PIGT; this interaction, via a disulfide link, stabilizes the expression of GAA1 and PIGK and links them to PIGS. The disulfide bond between PIGK/GPI8 and PIGT is important for normal enzyme activity.

The protein resides in the endoplasmic reticulum membrane. It participates in glycolipid biosynthesis; glycosylphosphatidylinositol-anchor biosynthesis. Its activity is regulated as follows. In the absence of proproteins substrates, exists in an inactive state with a disrupted catalytic site by an autoinhibitory loop. The binding of proprotein substrates, particularly the CSP region, to GPI-T triggers concerted conformational changes that alleviate the inhibition by the autoinhibitory loop. Meanwhile, proprotein residues near the omega- site induce the formation of a catalytic cleft for catalysis, following which the products are released and GPI-T reverts to the inactive state. In terms of biological role, catalytic subunit of the glycosylphosphatidylinositol-anchor (GPI-anchor) transamidase (GPI-T) complex that catalyzes the formation of the linkage between a proprotein and a GPI-anchor and participates in GPI anchored protein biosynthesis. Recognizes diverse proproteins at a C-terminal signal peptide (CSP) region that lacks consensus sequence and replaces it with a GPI-anchor via a transamidation reaction. Transamidation catalysis reaction follows a two-phase mechanism. In the acyl-enzyme phase, the carbonyl group of the proproteins's omega-site undergoes a nucleophilic attack forming an enzyme-substrate thioester bond. Followed by a general acid catalysis that allows CSP releasing, regenerating the carbonyl, and forming the acyl-enzyme intermediate. In the GPI-anchor attachment phase, the amino group of the GPI-anchor's ethanolamine phosphate, the one on third mannose (EtNP3), mediates a nucleophilic attack on the carbonyl of the acyl-enzyme intermediate, replacing the CSP, allowing GPI-anchor attachment to the omega-residue, therefore forming the product and freeing the enzyme. The chain is GPI-anchor transamidase from Sus scrofa (Pig).